A 364-amino-acid chain; its full sequence is Phosphoserine aminotransferase (364 aa).

Arginine 41 contributes to the L-glutamate binding site. Pyridoxal 5'-phosphate-binding positions include 75 to 76 (AS), tryptophan 100, threonine 155, aspartate 175, and glutamine 198. N6-(pyridoxal phosphate)lysine is present on lysine 199. 239-240 (NT) serves as a coordination point for pyridoxal 5'-phosphate.

The protein belongs to the class-V pyridoxal-phosphate-dependent aminotransferase family. SerC subfamily. Homodimer. Pyridoxal 5'-phosphate is required as a cofactor.

It localises to the cytoplasm. The catalysed reaction is O-phospho-L-serine + 2-oxoglutarate = 3-phosphooxypyruvate + L-glutamate. The enzyme catalyses 4-(phosphooxy)-L-threonine + 2-oxoglutarate = (R)-3-hydroxy-2-oxo-4-phosphooxybutanoate + L-glutamate. Its pathway is amino-acid biosynthesis; L-serine biosynthesis; L-serine from 3-phospho-D-glycerate: step 2/3. Catalyzes the reversible conversion of 3-phosphohydroxypyruvate to phosphoserine and of 3-hydroxy-2-oxo-4-phosphonooxybutanoate to phosphohydroxythreonine. This chain is Phosphoserine aminotransferase, found in Streptococcus uberis (strain ATCC BAA-854 / 0140J).